Reading from the N-terminus, the 328-residue chain is N-acetyl-gamma-glutamyl-phosphate reductase (328 aa).

Residue Cys-143 is part of the active site.

It belongs to the NAGSA dehydrogenase family. Type 1 subfamily.

Its subcellular location is the cytoplasm. The enzyme catalyses N-acetyl-L-glutamate 5-semialdehyde + phosphate + NADP(+) = N-acetyl-L-glutamyl 5-phosphate + NADPH + H(+). It participates in amino-acid biosynthesis; L-arginine biosynthesis; N(2)-acetyl-L-ornithine from L-glutamate: step 3/4. Catalyzes the NADPH-dependent reduction of N-acetyl-5-glutamyl phosphate to yield N-acetyl-L-glutamate 5-semialdehyde. The chain is N-acetyl-gamma-glutamyl-phosphate reductase from Methanoregula boonei (strain DSM 21154 / JCM 14090 / 6A8).